The following is a 926-amino-acid chain: Bifunctional uridylyltransferase/uridylyl-removing enzyme (926 aa).

The uridylyltransferase stretch occupies residues 1 to 379; that stretch reads MPVSFLSLAS…PKSRRSGASK (379 aa). The tract at residues 380-736 is uridylyl-removing; that stretch reads QIDGFPVIQG…GHEMPAYDAT (357 aa). An HD domain is found at 496–618; it reads VDEHAIRALD…VKSPERLRLL (123 aa). 2 consecutive ACT domains span residues 737-814 and 849-926; these read MISL…IRSS and VIEV…ISEK.

Belongs to the GlnD family. Mg(2+) serves as cofactor.

It catalyses the reaction [protein-PII]-L-tyrosine + UTP = [protein-PII]-uridylyl-L-tyrosine + diphosphate. The catalysed reaction is [protein-PII]-uridylyl-L-tyrosine + H2O = [protein-PII]-L-tyrosine + UMP + H(+). Uridylyltransferase (UTase) activity is inhibited by glutamine, while glutamine activates uridylyl-removing (UR) activity. Functionally, modifies, by uridylylation and deuridylylation, the PII regulatory proteins (GlnB and homologs), in response to the nitrogen status of the cell that GlnD senses through the glutamine level. Under low glutamine levels, catalyzes the conversion of the PII proteins and UTP to PII-UMP and PPi, while under higher glutamine levels, GlnD hydrolyzes PII-UMP to PII and UMP (deuridylylation). Thus, controls uridylylation state and activity of the PII proteins, and plays an important role in the regulation of nitrogen assimilation and metabolism. In Zymomonas mobilis subsp. mobilis (strain ATCC 31821 / ZM4 / CP4), this protein is Bifunctional uridylyltransferase/uridylyl-removing enzyme.